The primary structure comprises 205 residues: Interleukin-6 (205 aa).

A signal peptide spans 1-21 (RFTSAFSLGLLLVTATAFPTP). A disulfide bridge connects residues cysteine 64 and cysteine 70. At serine 73 the chain carries Phosphoserine. Cysteine 93 and cysteine 103 are joined by a disulfide. The N-linked (GlcNAc...) asparagine glycan is linked to asparagine 164.

The protein belongs to the IL-6 superfamily. Component of a hexamer of two molecules each of IL6, IL6R and IL6ST; first binds to IL6R to associate with the signaling subunit IL6ST. Interacts with IL6R (via the N-terminal ectodomain); this interaction may be affected by IL6R-binding with SORL1, hence decreasing IL6 cis signaling. Interacts with SORL1 (via the N-terminal ectodomain); this interaction leads to IL6 internalization and lysosomal degradation. May form a trimeric complex with the soluble SORL1 ectodomain and soluble IL6R receptor; this interaction might stabilize circulating IL6, hence promoting IL6 trans signaling.

It is found in the secreted. In terms of biological role, cytokine with a wide variety of biological functions in immunity, tissue regeneration, and metabolism. Binds to IL6R, then the complex associates to the signaling subunit IL6ST/gp130 to trigger the intracellular IL6-signaling pathway. The interaction with the membrane-bound IL6R and IL6ST stimulates 'classic signaling', whereas the binding of IL6 and soluble IL6R to IL6ST stimulates 'trans-signaling'. Alternatively, 'cluster signaling' occurs when membrane-bound IL6:IL6R complexes on transmitter cells activate IL6ST receptors on neighboring receiver cells. IL6 is a potent inducer of the acute phase response. Rapid production of IL6 contributes to host defense during infection and tissue injury, but excessive IL6 synthesis is involved in disease pathology. In the innate immune response, is synthesized by myeloid cells, such as macrophages and dendritic cells, upon recognition of pathogens through toll-like receptors (TLRs) at the site of infection or tissue injury. In the adaptive immune response, is required for the differentiation of B cells into immunoglobulin-secreting cells. Plays a major role in the differentiation of CD4(+) T cell subsets. Essential factor for the development of T follicular helper (Tfh) cells that are required for the induction of germinal-center formation. Required to drive naive CD4(+) T cells to the Th17 lineage. Also required for proliferation of myeloma cells and the survival of plasmablast cells. Its function is as follows. Acts as an essential factor in bone homeostasis and on vessels directly or indirectly by induction of VEGF, resulting in increased angiogenesis activity and vascular permeability. Induces, through 'trans-signaling' and synergistically with IL1B and TNF, the production of VEGF. Involved in metabolic controls, is discharged into the bloodstream after muscle contraction increasing lipolysis and improving insulin resistance. 'Trans-signaling' in central nervous system also regulates energy and glucose homeostasis. Mediates, through GLP-1, crosstalk between insulin-sensitive tissues, intestinal L cells and pancreatic islets to adapt to changes in insulin demand. Also acts as a myokine. Plays a protective role during liver injury, being required for maintenance of tissue regeneration. Also has a pivotal role in iron metabolism by regulating HAMP/hepcidin expression upon inflammation or bacterial infection. Through activation of IL6ST-YAP-NOTCH pathway, induces inflammation-induced epithelial regeneration. The chain is Interleukin-6 (IL6) from Orcinus orca (Killer whale).